The sequence spans 586 residues: Pyruvate kinase (586 aa).

Arg32 contacts substrate. The K(+) site is built by Asn34, Ser36, Asp66, and Thr67. Residue 34–37 (NFSH) coordinates ATP. 2 residues coordinate ATP: Arg73 and Lys156. Residue Glu222 coordinates Mg(2+). Substrate is bound by residues Gly245, Asp246, and Thr278. Residue Asp246 coordinates Mg(2+).

The protein belongs to the pyruvate kinase family. In the C-terminal section; belongs to the PEP-utilizing enzyme family. In terms of assembly, homotetramer. The cofactor is Mg(2+). K(+) serves as cofactor.

The catalysed reaction is pyruvate + ATP = phosphoenolpyruvate + ADP + H(+). The protein operates within carbohydrate degradation; glycolysis; pyruvate from D-glyceraldehyde 3-phosphate: step 5/5. The chain is Pyruvate kinase (pyk) from Sporosarcina psychrophila (Bacillus psychrophilus).